Here is a 354-residue protein sequence, read N- to C-terminus: Selenide, water dikinase (354 aa).

Selenocysteine 21 is an active-site residue. Residue selenocysteine 21 is a non-standard amino acid, selenocysteine. ATP is bound by residues lysine 24 and 51-53 (TSD). Mg(2+) is bound at residue aspartate 54. ATP-binding positions include aspartate 71, aspartate 94, and 141 to 143 (GHT). Aspartate 94 contributes to the Mg(2+) binding site. A Mg(2+)-binding site is contributed by aspartate 229.

This sequence belongs to the selenophosphate synthase 1 family. Class I subfamily. As to quaternary structure, homodimer. Requires Mg(2+) as cofactor.

The enzyme catalyses hydrogenselenide + ATP + H2O = selenophosphate + AMP + phosphate + 2 H(+). In terms of biological role, synthesizes selenophosphate from selenide and ATP. This Treponema denticola (strain ATCC 35405 / DSM 14222 / CIP 103919 / JCM 8153 / KCTC 15104) protein is Selenide, water dikinase.